We begin with the raw amino-acid sequence, 633 residues long: DNA mismatch repair protein MutL (633 aa).

Disordered regions lie at residues 337-364 and 383-405; these read RPDDQLAPPGATSLTEPRPTGAAAGEFG and VGWSGGSSASGGSSGYSAYTRPE. Over residues 385-396 the composition is skewed to gly residues; the sequence is WSGGSSASGGSS.

It belongs to the DNA mismatch repair MutL/HexB family.

Its function is as follows. This protein is involved in the repair of mismatches in DNA. It is required for dam-dependent methyl-directed DNA mismatch repair. May act as a 'molecular matchmaker', a protein that promotes the formation of a stable complex between two or more DNA-binding proteins in an ATP-dependent manner without itself being part of a final effector complex. This Pseudomonas aeruginosa (strain LESB58) protein is DNA mismatch repair protein MutL.